A 362-amino-acid chain; its full sequence is Dual-specificity RNA methyltransferase RlmN (362 aa).

Catalysis depends on Glu91, which acts as the Proton acceptor. Residues 97–333 (EDDRGTLCVS…VTTRKTRGED (237 aa)) enclose the Radical SAM core domain. A disulfide bridge links Cys104 with Cys338. [4Fe-4S] cluster is bound by residues Cys111, Cys115, and Cys118. S-adenosyl-L-methionine-binding positions include 164-165 (GE), Ser196, 218-220 (SLH), and Asn295. The active-site S-methylcysteine intermediate is the Cys338.

Belongs to the radical SAM superfamily. RlmN family. Requires [4Fe-4S] cluster as cofactor.

It is found in the cytoplasm. The catalysed reaction is adenosine(2503) in 23S rRNA + 2 reduced [2Fe-2S]-[ferredoxin] + 2 S-adenosyl-L-methionine = 2-methyladenosine(2503) in 23S rRNA + 5'-deoxyadenosine + L-methionine + 2 oxidized [2Fe-2S]-[ferredoxin] + S-adenosyl-L-homocysteine. It carries out the reaction adenosine(37) in tRNA + 2 reduced [2Fe-2S]-[ferredoxin] + 2 S-adenosyl-L-methionine = 2-methyladenosine(37) in tRNA + 5'-deoxyadenosine + L-methionine + 2 oxidized [2Fe-2S]-[ferredoxin] + S-adenosyl-L-homocysteine. Specifically methylates position 2 of adenine 2503 in 23S rRNA and position 2 of adenine 37 in tRNAs. m2A2503 modification seems to play a crucial role in the proofreading step occurring at the peptidyl transferase center and thus would serve to optimize ribosomal fidelity. The polypeptide is Dual-specificity RNA methyltransferase RlmN (Methylobacillus flagellatus (strain ATCC 51484 / DSM 6875 / VKM B-1610 / KT)).